The sequence spans 345 residues: Arginase (345 aa).

Residues 1–16 (MKETAAAKFERQHMDS) are compositionally biased toward basic and acidic residues. The interval 1–34 (MKETAAAKFERQHMDSPDLGTDDDDKMSPATSPF) is disordered. Positions 101, 124, 126, 128, 232, and 234 each coordinate Mn(2+).

This sequence belongs to the arginase family. Homotrimer. Mn(2+) serves as cofactor.

The enzyme catalyses L-arginine + H2O = urea + L-ornithine. It functions in the pathway nitrogen metabolism; urea cycle; L-ornithine and urea from L-arginine: step 1/1. The enzyme activity is increased in the range of 20-50% upon the addition of Mn(2+) (1 mM), Co(2+) (1 mM), Ni(2+) (1 and 5 mM) and K(+) (5 mM). In contrast, the addition of Cu(2+), Zn(2+), Ca(2+), Mg(2+), Fe(2+) (both 1 and 5 mM), and Co(2+) (5 mM) strongly suppresses the arginase activity. SDS (1%) and EDTA (1 mM) are the most potent inhibitors. Reducing agents DTT (1 mM), PMSF (1 mM) and beta-mercaptoethanol (1 mM) also significantly inhibit activity by 85%, 64% and 35%, respectively. Surfactants Triton X-100 (1%), Tween-80 (1%) and Tween-20 (1%) are more tolerant, showing a slight decrease of arginase activity in the range of 10-30%. In terms of biological role, cold-active L-arginase that catalyzes the hydrolysis of L-arginine to L-ornithine and urea, an essential reaction in the urea cycle for toxic ammonia removal and cell proliferation. Is not able to use D-arginine or L-canavanine as substrates. This Glaciozyma antarctica (strain PI12) (Antarctic psychrophilic yeast) protein is Arginase.